Here is a 1194-residue protein sequence, read N- to C-terminus: Pre-mRNA-processing ATP-dependent RNA helicase prp-5 (1194 aa).

3 disordered regions span residues 1 to 201, 224 to 248, and 452 to 484; these read MARL…KEAK, AVVG…ASPA, and ASGE…DDYG. 2 stretches are compositionally biased toward basic and acidic residues: residues 21–37 and 44–154; these read RKDD…GPVD and SPID…RDQP. Positions 156–176 are enriched in polar residues; the sequence is PGNTTAKENEPAKSTPTQPQT. The span at 177 to 186 shows a compositional bias: basic and acidic residues; that stretch reads EAEKKAERLR. A compositionally biased stretch (low complexity) spans 232–248; it reads SPAPASPAAAESPASPA. Basic and acidic residues predominate over residues 455–469; that stretch reads EESHSKADTLTEKKN. The Q motif motif lies at 561–589; the sequence is QKWSQCGLTRPILDTIESLGFEKPTPIQM. The 179-residue stretch at 592 to 770 folds into the Helicase ATP-binding domain; the sequence is LPVIMSGRDV…KKVLRDPVEI (179 aa). Residue 605–612 coordinates ATP; that stretch reads AKTGSGKT. Residues 718–721 carry the DEAD box motif; it reads DEAD. The Helicase C-terminal domain occupies 797-945; the sequence is RLLELLGELY…PVPDRLNEMR (149 aa). 2 disordered regions span residues 952-1011 and 1025-1056; these read VKAG…DKTK and DASK…SGGA. Basic and acidic residues-rich tracts occupy residues 967 to 980, 997 to 1011, and 1025 to 1036; these read GLEK…AARM, EDAP…DKTK, and DASKAETEDKHA.

This sequence belongs to the DEAD box helicase family. DDX46/PRP5 subfamily.

It localises to the nucleus. The catalysed reaction is ATP + H2O = ADP + phosphate + H(+). In terms of biological role, ATP-dependent RNA helicase involved spliceosome assembly and in nuclear splicing. Catalyzes an ATP-dependent conformational change of U2 snRNP. Bridges U1 and U2 snRNPs and enables stable U2 snRNP association with intron RNA. The chain is Pre-mRNA-processing ATP-dependent RNA helicase prp-5 (prp-5) from Neurospora crassa (strain ATCC 24698 / 74-OR23-1A / CBS 708.71 / DSM 1257 / FGSC 987).